We begin with the raw amino-acid sequence, 236 residues long: Dense granule protein 7 (236 aa).

A signal peptide spans 1-26; it reads MARHAIFSALCVLGLVAAALPQFATA. The tract at residues 45 to 106 is disordered; it reads DGQAPVDSLR…EVHFRKRGVR (62 aa). Polar residues predominate over residues 70 to 80; it reads TTSMDKASVES. The required for dimerization, interactions with liposomes and liposome tubulation stretch occupies residues 147–236; sequence AVGMGASYFA…SGEDGEDARQ (90 aa). The chain crosses the membrane as a helical span at residues 181-201; the sequence is VGTVLGFAALAAAAAFLGMGL. Residues 208–236 are disordered; it reads FSPRKNRSRQPALEQEVPESGEDGEDARQ. The N-linked (GlcNAc...) asparagine glycan is linked to asparagine 213. Residues 223–236 are compositionally biased toward acidic residues; that stretch reads EVPESGEDGEDARQ.

It belongs to the Gra7 family. In terms of assembly, homodimer. Can form higher order homooligomers in a lipid-stimulated manner. Component of a complex at least composed of ROP18, GRA7 and ROP2. Interacts with ROP5. Interacts with ROP18 in the absence of ROP5. Interacts with mouse IRGA6/IIGP1 in GTP-dependent manner; the interaction results in faster turnover of the GTP-activated IRGA6/IIGP1 oligomer. Interacts with mouse TRAF6 (via N-terminal RING domain); the interaction plays a role in GRA7-induced pro-inflammatory cytokine production in mouse macrophages.

It localises to the secreted. The protein localises to the parasitophorous vacuole lumen. The protein resides in the parasitophorous vacuole membrane. Its subcellular location is the cytoplasm. It is found in the host cytoplasm. It localises to the cytoplasmic vesicle. The protein localises to the secretory vesicle. Functionally, binds lipid bilayers, sequesters host endocytic organelles in the parasitophorous vacuole space, and causes their deformation and remodeling. Plays a role in nutrient acquisition from the host. In complex with ROP18, targets immunity-related GTPases (IRGs) to prevent IRG-mediated parasite killing by mouse cells. Important component within a kinase complex, contributing to phosphorylation of mouse IRGA6/IIGP1, an immunity-related GTPase that protects mice from infection by certain intracellular pathogens, by Toxoplasma gondii ROP5 and ROP18. Induces pro-inflammatory cytokine production in host macrophages. Activates host pro-inflammatory signaling pathways in a MyD88-dependent manner. Triggers generation of reactive oxygen species (ROS) in host cells. Activates MAPK pathway in host cells. Activates host NF-kappa-B signaling pathway by interacting with TRAF6 and modulating the 'Lys-63'-linked polyubiquitination of TRAF6. In Toxoplasma gondii, this protein is Dense granule protein 7.